A 787-amino-acid chain; its full sequence is Pleckstrin homology domain-containing family G member 6 (787 aa).

Residues 161–353 enclose the DH domain; sequence HQQEALWELL…ESFLRHINGQ (193 aa). One can recognise a PH domain in the interval 409 to 509; that stretch reads QLLLEGPVRV…WLEKTQHAQT (101 aa). The tract at residues 533-762 is disordered; the sequence is QGTESPSTRP…EPGNGKPRRL (230 aa). The segment covering 535–557 has biased composition (low complexity); it reads TESPSTRPSTPSPSPEDSQSSAE. Over residues 724–742 the composition is skewed to basic and acidic residues; that stretch reads LRPRSLREDMLREIREELA.

As to quaternary structure, interacts with MYH10. Interacts with ELMO1 and EZR (in an open conformation). Interacts with CSPP1.

It is found in the cell projection. The protein resides in the microvillus. The protein localises to the cytoplasm. Its subcellular location is the cytoskeleton. It localises to the spindle. It is found in the cleavage furrow. Guanine nucleotide exchange factor activating the small GTPase RHOA, which, in turn, induces myosin filament formation. Also activates RHOG. Does not activate RAC1, or to a much lower extent than RHOA and RHOG. Part of a functional unit, involving PLEKHG6, MYH10 and RHOA, at the cleavage furrow to advance furrow ingression during cytokinesis. In epithelial cells, required for the formation of microvilli and membrane ruffles on the apical pole. Along with EZR, required for normal macropinocytosis. This is Pleckstrin homology domain-containing family G member 6 (Plekhg6) from Mus musculus (Mouse).